A 343-amino-acid polypeptide reads, in one-letter code: MDTMYWKDNTLFLLDQTKLPIEVKYVKLKTYEEVAEAIVSMKVRGAPAIGAAAAYGMVLGVMGYRNDQNLEVYLKNVYETLKNTRPTAVNLFWALDRMWKKYLEVKNQTFEEIANALLNEANSIFYEDIELNKKIGAYGLEVVPENASILTHCNAGALATAGYGTALGVVRAAFEAGKLRKVFADETRPLLQGARLTAFELLEDGIDVTLICDNMAGYVMSLGLVDLVVVGADRVTANGDVANKIGTYSLAILAKEHGIPFYVAAPYSTIDLNLTSGQDIPIEERNPDEVRKIGDRLIAPPQVKVFNPAFDVTPAKYITGIITDRGIVRPPYKENIKKLFGGK.

Substrate contacts are provided by residues 44 to 46 (RGA), Arg85, and Gln192. Asp233 functions as the Proton donor in the catalytic mechanism. Substrate is bound at residue 243–244 (NK).

This sequence belongs to the eIF-2B alpha/beta/delta subunits family. MtnA subfamily.

The enzyme catalyses 5-(methylsulfanyl)-alpha-D-ribose 1-phosphate = 5-(methylsulfanyl)-D-ribulose 1-phosphate. Its pathway is amino-acid biosynthesis; L-methionine biosynthesis via salvage pathway; L-methionine from S-methyl-5-thio-alpha-D-ribose 1-phosphate: step 1/6. Catalyzes the interconversion of methylthioribose-1-phosphate (MTR-1-P) into methylthioribulose-1-phosphate (MTRu-1-P). This is Methylthioribose-1-phosphate isomerase from Carboxydothermus hydrogenoformans (strain ATCC BAA-161 / DSM 6008 / Z-2901).